We begin with the raw amino-acid sequence, 100 residues long: Small ribosomal subunit protein uS14c (100 aa).

This sequence belongs to the universal ribosomal protein uS14 family. In terms of assembly, part of the 30S ribosomal subunit.

It is found in the plastid. Its subcellular location is the chloroplast. Binds 16S rRNA, required for the assembly of 30S particles. The polypeptide is Small ribosomal subunit protein uS14c (Capsella bursa-pastoris (Shepherd's purse)).